The chain runs to 534 residues: T-complex protein 1 subunit gamma (534 aa).

N-acetylmethionine is present on Met1. Ser257 is subject to Phosphoserine. A disulfide bridge connects residues Cys371 and Cys377.

This sequence belongs to the TCP-1 chaperonin family. As to quaternary structure, heterooligomeric complex of about 850 to 900 kDa that forms two stacked rings, 12 to 16 nm in diameter.

Its subcellular location is the cytoplasm. Molecular chaperone; assists the folding of proteins upon ATP hydrolysis. Known to play a role, in vitro, in the folding of actin and tubulin. In yeast may play a role in mitotic spindle formation. This Saccharomyces cerevisiae (strain ATCC 204508 / S288c) (Baker's yeast) protein is T-complex protein 1 subunit gamma (CCT3).